The chain runs to 585 residues: Pyruvate kinase (585 aa).

Arginine 32 serves as a coordination point for substrate. K(+) contacts are provided by asparagine 34, serine 36, aspartate 66, and threonine 67. Residue 34–37 (NFSH) coordinates ATP. The ATP site is built by arginine 73 and lysine 156. Glutamate 221 is a Mg(2+) binding site. Residues glycine 244, aspartate 245, and threonine 277 each coordinate substrate. Aspartate 245 lines the Mg(2+) pocket.

The protein belongs to the pyruvate kinase family. It in the C-terminal section; belongs to the PEP-utilizing enzyme family. The cofactor is Mg(2+). K(+) serves as cofactor.

It catalyses the reaction pyruvate + ATP = phosphoenolpyruvate + ADP + H(+). It functions in the pathway carbohydrate degradation; glycolysis; pyruvate from D-glyceraldehyde 3-phosphate: step 5/5. The chain is Pyruvate kinase (pyk) from Staphylococcus aureus (strain MRSA252).